We begin with the raw amino-acid sequence, 169 residues long: Crossover junction endodeoxyribonuclease RuvC (169 aa).

Residues D11, E71, and D143 contribute to the active site. The Mg(2+) site is built by D11, E71, and D143.

It belongs to the RuvC family. As to quaternary structure, homodimer which binds Holliday junction (HJ) DNA. The HJ becomes 2-fold symmetrical on binding to RuvC with unstacked arms; it has a different conformation from HJ DNA in complex with RuvA. In the full resolvosome a probable DNA-RuvA(4)-RuvB(12)-RuvC(2) complex forms which resolves the HJ. Mg(2+) serves as cofactor.

The protein localises to the cytoplasm. The enzyme catalyses Endonucleolytic cleavage at a junction such as a reciprocal single-stranded crossover between two homologous DNA duplexes (Holliday junction).. In terms of biological role, the RuvA-RuvB-RuvC complex processes Holliday junction (HJ) DNA during genetic recombination and DNA repair. Endonuclease that resolves HJ intermediates. Cleaves cruciform DNA by making single-stranded nicks across the HJ at symmetrical positions within the homologous arms, yielding a 5'-phosphate and a 3'-hydroxyl group; requires a central core of homology in the junction. The consensus cleavage sequence is 5'-(A/T)TT(C/G)-3'. Cleavage occurs on the 3'-side of the TT dinucleotide at the point of strand exchange. HJ branch migration catalyzed by RuvA-RuvB allows RuvC to scan DNA until it finds its consensus sequence, where it cleaves and resolves the cruciform DNA. This is Crossover junction endodeoxyribonuclease RuvC from Rhizobium etli (strain ATCC 51251 / DSM 11541 / JCM 21823 / NBRC 15573 / CFN 42).